Here is a 795-residue protein sequence, read N- to C-terminus: Multiple C2 domain and transmembrane region protein 12 (795 aa).

3 C2 domains span residues 24-142 (RNPR…PQWY), 180-298 (VCAS…SAPA), and 341-463 (YSSD…TCSY). Ca(2+)-binding residues include Asn57, Asp109, and Asn113. 4 helical membrane-spanning segments follow: residues 590–610 (CTPKFIALGVSFVFLFWEYYI), 612–632 (WLVTSWLVAYCIVLCIVVILL), 730–750 (FVLIILLALCYCSMLVVCLGW), and 752–772 (LHVRKCLIFVFICYWVQLPWF).

It belongs to the MCTP family. Ca(2+) is required as a cofactor. As to expression, expressed in root vascular tissues and meristems. Observed in flowers.

It localises to the endoplasmic reticulum membrane. Its function is as follows. May function as a signaling molecule by regulating the trafficking of other regulators. This Arabidopsis thaliana (Mouse-ear cress) protein is Multiple C2 domain and transmembrane region protein 12.